A 336-amino-acid polypeptide reads, in one-letter code: MQKMRTLGEFIVEKQHDFPHASGELSSLLASIRLAAKIVNREINKAGLADIIGASGNDNIQGEEQQKLDLYANEKFKAALEARDQVCGVASEEEDEAVAFSKELNKNAKYVVLMDPLDGSSNIDVNVSVGTIFSIYRRVSPVGTPPTQEDFLQPGNKQVAAGYVIYGSSTMLVYTTGNGVNGFTYDPSLGTFYLSHENMRIPENGKIYSINEGNYIRFPTGVKKYIKFCQENVPEEGRPYTSRYIGSLVADFHRNLLKGGIYLYPSTQSHPNGKLRLLYECNPMAFLIEQAGGLASDGARRIMDIKPTELHQRVPFFVGSKNMVHKVETFLETYPD.

Residues E92, D115, L117, and D118 each contribute to the Mg(2+) site. Substrate-binding positions include 118-121, N211, Y244, 262-264, and K274; these read DGSS and YLY. E280 lines the Mg(2+) pocket.

Belongs to the FBPase class 1 family. In terms of assembly, homotetramer. Mg(2+) serves as cofactor.

It is found in the cytoplasm. The enzyme catalyses beta-D-fructose 1,6-bisphosphate + H2O = beta-D-fructose 6-phosphate + phosphate. Its pathway is carbohydrate biosynthesis; gluconeogenesis. The polypeptide is Fructose-1,6-bisphosphatase class 1 (Vibrio cholerae serotype O1 (strain ATCC 39315 / El Tor Inaba N16961)).